A 156-amino-acid polypeptide reads, in one-letter code: tRNA (cytidine(34)-2'-O)-methyltransferase (156 aa).

Residues glycine 100, isoleucine 122, and serine 130 each contribute to the S-adenosyl-L-methionine site.

Belongs to the class IV-like SAM-binding methyltransferase superfamily. RNA methyltransferase TrmH family. TrmL subfamily. Homodimer.

Its subcellular location is the cytoplasm. The enzyme catalyses cytidine(34) in tRNA + S-adenosyl-L-methionine = 2'-O-methylcytidine(34) in tRNA + S-adenosyl-L-homocysteine + H(+). It catalyses the reaction 5-carboxymethylaminomethyluridine(34) in tRNA(Leu) + S-adenosyl-L-methionine = 5-carboxymethylaminomethyl-2'-O-methyluridine(34) in tRNA(Leu) + S-adenosyl-L-homocysteine + H(+). Methylates the ribose at the nucleotide 34 wobble position in the two leucyl isoacceptors tRNA(Leu)(CmAA) and tRNA(Leu)(cmnm5UmAA). Catalyzes the methyl transfer from S-adenosyl-L-methionine to the 2'-OH of the wobble nucleotide. This Aeromonas hydrophila subsp. hydrophila (strain ATCC 7966 / DSM 30187 / BCRC 13018 / CCUG 14551 / JCM 1027 / KCTC 2358 / NCIMB 9240 / NCTC 8049) protein is tRNA (cytidine(34)-2'-O)-methyltransferase.